Here is a 103-residue protein sequence, read N- to C-terminus: Small ribosomal subunit protein uS10 (103 aa).

Belongs to the universal ribosomal protein uS10 family. In terms of assembly, part of the 30S ribosomal subunit.

Its function is as follows. Involved in the binding of tRNA to the ribosomes. This chain is Small ribosomal subunit protein uS10, found in Laribacter hongkongensis (strain HLHK9).